The primary structure comprises 459 residues: Sensor histidine kinase SpaK (459 aa).

Over methionine 1 to tyrosine 18 the chain is Cytoplasmic. A helical transmembrane segment spans residues methionine 19 to isoleucine 39. Residues alanine 40 to threonine 155 lie on the Extracellular side of the membrane. A helical membrane pass occupies residues serine 156 to alanine 176. At asparagine 177–glutamate 459 the chain is on the cytoplasmic side. Residues alanine 244 to asparagine 458 form the Histidine kinase domain. A Phosphohistidine; by autocatalysis modification is found at histidine 247.

Its subcellular location is the cell membrane. It carries out the reaction ATP + protein L-histidine = ADP + protein N-phospho-L-histidine.. Functionally, member of the two-component regulatory system SpaK/SpaR involved in the regulation of the biosynthesis of lantibiotic subtilin. SpaK may function as a membrane-associated protein kinase that phosphorylates SpaR in response to environmental signals. This Bacillus subtilis protein is Sensor histidine kinase SpaK (spaK).